The following is an 83-amino-acid chain: Mu-theraphotoxin-Hhn2c (83 aa).

Positions 1–21 (MKASMFLALAGLVLLFVVGYA) are cleaved as a signal peptide. Positions 22-48 (SESEEKEFPIELLSKIFAVDVFKGEER) are excised as a propeptide. 3 cysteine pairs are disulfide-bonded: Cys-50–Cys-65, Cys-57–Cys-70, and Cys-64–Cys-77. Leu-81 is subject to Leucine amide.

It belongs to the neurotoxin 10 (Hwtx-1) family. 15 (Hntx-3) subfamily. In terms of assembly, monomer. As to expression, expressed by the venom gland.

Its subcellular location is the secreted. Its function is as follows. Lethal neurotoxin. Selectively blocks tetrodotoxin-sensitive voltage-gated sodium channels (Nav). Does not affect tetrodotoxin-resistant voltage-gated sodium channels or calcium channels. This is Mu-theraphotoxin-Hhn2c from Cyriopagopus hainanus (Chinese bird spider).